The following is a 397-amino-acid chain: Elongation factor Tu (397 aa).

The tr-type G domain occupies 10–206 (KPHVNIGTIG…AIDSYIPTPE (197 aa)). Positions 19 to 26 (GHVDHGKT) are G1. 19–26 (GHVDHGKT) is a GTP binding site. A Mg(2+)-binding site is contributed by threonine 26. The tract at residues 60-64 (GITIN) is G2. The interval 81–84 (DCPG) is G3. GTP contacts are provided by residues 81–85 (DCPGH) and 136–139 (NKAD). The G4 stretch occupies residues 136-139 (NKAD). The tract at residues 174–176 (SAL) is G5.

The protein belongs to the TRAFAC class translation factor GTPase superfamily. Classic translation factor GTPase family. EF-Tu/EF-1A subfamily. Monomer.

The protein resides in the cytoplasm. The catalysed reaction is GTP + H2O = GDP + phosphate + H(+). In terms of biological role, GTP hydrolase that promotes the GTP-dependent binding of aminoacyl-tRNA to the A-site of ribosomes during protein biosynthesis. The polypeptide is Elongation factor Tu (Clostridium botulinum (strain Loch Maree / Type A3)).